A 130-amino-acid polypeptide reads, in one-letter code: Small ribosomal subunit protein uS8 (130 aa).

The protein belongs to the universal ribosomal protein uS8 family.

The protein resides in the cytoplasm. This chain is Small ribosomal subunit protein uS8 (RPS15A), found in Daucus carota (Wild carrot).